The primary structure comprises 472 residues: Velvet complex subunit umv2 (472 aa).

Composition is skewed to basic and acidic residues over residues 1 to 10 (MSRSDTDGRD), 29 to 59 (SQRR…DSHG), 67 to 80 (YSRD…HRGD), and 89 to 105 (SYQR…EQER). Disordered stretches follow at residues 1–121 (MSRS…PLEA), 281–327 (CDDG…QFGG), and 433–472 (SQGI…EDDE). The segment covering 106-116 (SYGGASASRSS) has biased composition (low complexity). Residues 158–441 (ENGRRYRLVV…ASQGIKIPVR (284 aa)) enclose the Velvet domain. Positions 286-298 (RSSTHPQHASEST) are enriched in polar residues. The span at 456-466 (DGMGDYDGASG) shows a compositional bias: gly residues.

The protein belongs to the velvet family. VelB subfamily. In terms of assembly, component of the heterotrimeric velvet complex composed of laeA, veA and velB; VeA acting as a bridging protein between laeA and velB. Forms a heterodimeric complex with vosA; the formation of the velB-vosA complex is light-dependent.

It localises to the nucleus. The protein localises to the cytoplasm. In terms of biological role, component of the velvet transcription factor complex that controls sexual/asexual developmental ratio in response to light, promoting sexual development in the darkness while stimulating asexual sporulation under illumination. The velvet complex acts as a global regulator for secondary metabolite gene expression. Component of the velB-VosA heterodimeric complex that plays a dual role in activating genes associated with spore maturation and repressing certain development-associated genes. The velB-VosA complex binds DNA through the DNA-binding domain of vosA that recognizes an 11-nucleotide consensus sequence 5'-CTGGCCGCGGC-3' consisting of two motifs in the promoters of key developmental regulatory genes. Required for full virulence on seedlings. The polypeptide is Velvet complex subunit umv2 (Mycosarcoma maydis (Corn smut fungus)).